A 98-amino-acid chain; its full sequence is uncharacterized protein (98 aa).

It belongs to the HesB/IscA family.

This is an uncharacterized protein from Staphylococcus epidermidis (strain ATCC 35984 / DSM 28319 / BCRC 17069 / CCUG 31568 / BM 3577 / RP62A).